The primary structure comprises 1082 residues: M cell-type agglutination protein mam3 (1082 aa).

The first 18 residues, 1–18 (MSIALAFFILVLLGFSWA), serve as a signal peptide directing secretion. Residues asparagine 28, asparagine 56, and asparagine 82 are each glycosylated (N-linked (GlcNAc...) asparagine). A disordered region spans residues 353–374 (TSSSSTDQLTSASPISSSVISP). N-linked (GlcNAc...) asparagine glycans are attached at residues asparagine 451, asparagine 475, asparagine 495, asparagine 520, asparagine 548, asparagine 588, asparagine 613, and asparagine 638. 11 tandem repeats follow at residues 646 to 681 (QTTT…VPTP), 682 to 717 (SWIT…IPTP), 718 to 753 (SWVT…VPTP), 754 to 789 (SWVT…IPTP), 790 to 825 (SWVT…IPTP), 826 to 861 (SWVT…VPTP), 862 to 897 (SWVT…IPTP), 898 to 933 (SWVT…IPTP), 934 to 969 (SWVT…IPTP), 970 to 1005 (SWVT…IPTP), and 1006 to 1041 (SWVT…IPQQ). The interval 720–1043 (VTETVTSGSI…VLVDIPQQHA (324 aa)) is 11 X 36 AA approximate tandem repeats.

The protein belongs to the mam3/map4 family.

The protein localises to the cell surface. Its function is as follows. M cell-type specific protein involved in agglutination during conjugation. The polypeptide is M cell-type agglutination protein mam3 (Schizosaccharomyces pombe (strain 972 / ATCC 24843) (Fission yeast)).